Reading from the N-terminus, the 234-residue chain is Large ribosomal subunit protein uL1 (234 aa).

Belongs to the universal ribosomal protein uL1 family. As to quaternary structure, part of the 50S ribosomal subunit.

Binds directly to 23S rRNA. The L1 stalk is quite mobile in the ribosome, and is involved in E site tRNA release. In terms of biological role, protein L1 is also a translational repressor protein, it controls the translation of the L11 operon by binding to its mRNA. The protein is Large ribosomal subunit protein uL1 of Edwardsiella ictaluri (strain 93-146).